A 231-amino-acid chain; its full sequence is Ureidoacrylate amidohydrolase RutB (231 aa).

Asp-25 functions as the Proton acceptor in the catalytic mechanism. Lys-134 is an active-site residue. Catalysis depends on Cys-167, which acts as the Nucleophile.

The protein belongs to the isochorismatase family. RutB subfamily.

It carries out the reaction (Z)-3-ureidoacrylate + H2O + H(+) = (Z)-3-aminoacrylate + NH4(+) + CO2. It catalyses the reaction (Z)-3-ureidoacrylate + H2O = (Z)-3-aminoacrylate + carbamate + H(+). The enzyme catalyses (Z)-2-methylureidoacrylate + H2O + H(+) = (Z)-2-methylaminoacrylate + NH4(+) + CO2. Its function is as follows. Hydrolyzes ureidoacrylate to form aminoacrylate and carbamate. The carbamate hydrolyzes spontaneously, thereby releasing one of the nitrogen atoms of the pyrimidine ring as ammonia and one of its carbon atoms as CO2. The chain is Ureidoacrylate amidohydrolase RutB from Escherichia coli (strain SMS-3-5 / SECEC).